A 1021-amino-acid polypeptide reads, in one-letter code: Sodium/potassium-transporting ATPase subunit alpha-1 (1021 aa).

Positions 1-5 (MGKGV) are excised as a propeptide. A compositionally biased stretch (basic and acidic residues) spans 1–11 (MGKGVGRDKYE). The disordered stretch occupies residues 1 to 36 (MGKGVGRDKYEPAAVSEHGDKKKAKKERDMDELKKE). The Cytoplasmic segment spans residues 6–85 (GRDKYEPAAV…NALTPPPTTP (80 aa)). Lysine 9 carries the N6-acetyllysine modification. Tyrosine 10 carries the phosphotyrosine modification. At serine 16 the chain carries Phosphoserine; by PKC. Lysine 21 carries the N6-acetyllysine modification. Positions 26 to 36 (KERDMDELKKE) are enriched in basic and acidic residues. A phosphoserine mark is found at serine 38 and serine 45. The interval 80 to 82 (PPP) is phosphoinositide-3 kinase binding. The helical transmembrane segment at 86–106 (EWVKFCRQLFGGFSMLLWIGA) threads the bilayer. The Extracellular portion of the chain corresponds to 107-129 (VLCFLAYGIQAATEEEPQNDNLY). The chain crosses the membrane as a helical span at residues 130 to 150 (LGVVLSAVVIITGCFSYYQEA). Over 151–286 (KSSKIMESFK…GGQTPIAAEI (136 aa)) the chain is Cytoplasmic. Serine 226 carries the phosphoserine modification. Tyrosine 258 bears the Phosphotyrosine mark. The helical transmembrane segment at 287-306 (EHFIHIITGVAVFLGVSFFI) threads the bilayer. At 307–318 (LSLILEYTWLEA) the chain is on the extracellular side. Residues 319-336 (VIFLIGIIVANVPEGLLA) form a helical membrane-spanning segment. The Cytoplasmic segment spans residues 337-770 (TVTVCLTLTA…EEGRLIFDNL (434 aa)). Aspartate 374 functions as the 4-aspartylphosphate intermediate in the catalytic mechanism. Phosphoserine is present on residues serine 450 and serine 482. An ATP-binding site is contributed by lysine 485. Residue tyrosine 540 is modified to Phosphotyrosine. The interval 594-715 (RAAVPDAVGK…QGAIVAVTGD (122 aa)) is mediates interaction with SCN7A. Residue serine 666 is modified to Phosphoserine. Aspartate 715 and aspartate 719 together coordinate Mg(2+). A helical transmembrane segment spans residues 771–790 (KKSIAYTLTSNIPEITPFLI). Topologically, residues 791–800 (FIIANIPLPL) are extracellular. The helical transmembrane segment at 801–821 (GTVTILCIDLGTDMVPAISLA) threads the bilayer. Topologically, residues 822–841 (YEQAESDIMKRQPRNPQTDK) are cytoplasmic. The chain crosses the membrane as a helical span at residues 842 to 864 (LVNERLISMAYGQIGMIQALGGF). Residues 865–916 (FTYFVIMAENGFLPNHLLGIRVTWDDRWINDVEDSYGQQWTYEQRKIVEFTC) are Extracellular-facing. The chain crosses the membrane as a helical span at residues 917-936 (HTAFFVSIVVVQWADLVICK). At 937 to 949 (TRRNSVFQQGMKN) the chain is on the cytoplasmic side. At serine 941 the chain carries Phosphoserine; by PKA. The helical transmembrane segment at 950-968 (KILIFGLFEETALAAFLSY) threads the bilayer. The Extracellular portion of the chain corresponds to 969-983 (CPGMGVALRMYPLKP). The helical transmembrane segment at 984-1004 (TWWFCAFPYSLLIFVYDEVRK) threads the bilayer. Over 1005 to 1021 (LIIRRRPGGWVEKETYY) the chain is Cytoplasmic.

Belongs to the cation transport ATPase (P-type) (TC 3.A.3) family. Type IIC subfamily. The sodium/potassium-transporting ATPase is composed of a catalytic alpha subunit, an auxiliary non-catalytic beta subunit and an additional regulatory subunit. Interacts with regulatory subunit FXYD1. Interacts with regulatory subunit FXYD3. Interacts with SIK1. Interacts with SLC35G1 and STIM1. Interacts with CLN3; this interaction regulates the sodium/potassium-transporting ATPase complex localization at the plasma membrane. Interacts with SCN7A; activates ATP1A1 P-type sodium:potassium-exchanging transporter activity which indirectly signals to nearby neurons to regulate sodium homeostasis. Phosphorylation on Tyr-10 modulates pumping activity. Phosphorylation of Ser-941 by PKA modulates the response of ATP1A1 to PKC. Dephosphorylation by protein phosphatase 2A (PP2A) following increases in intracellular sodium, leading to increase catalytic activity.

It is found in the cell membrane. The protein localises to the basolateral cell membrane. Its subcellular location is the sarcolemma. It localises to the cell projection. The protein resides in the axon. It is found in the melanosome. The catalysed reaction is K(+)(out) + Na(+)(in) + ATP + H2O = K(+)(in) + Na(+)(out) + ADP + phosphate + H(+). Its activity is regulated as follows. Specifically inhibited by cardiac glycosides such as digoxin or ouabain. Functionally, this is the catalytic component of the active enzyme, which catalyzes the hydrolysis of ATP coupled with the exchange of sodium and potassium ions across the plasma membrane. This action creates the electrochemical gradient of sodium and potassium ions, providing the energy for active transport of various nutrients. Could also be part of an osmosensory signaling pathway that senses body-fluid sodium levels and controls salt intake behavior as well as voluntary water intake to regulate sodium homeostasis. This Ovis aries (Sheep) protein is Sodium/potassium-transporting ATPase subunit alpha-1 (ATP1A1).